Consider the following 189-residue polypeptide: dCTP deaminase (189 aa).

Residues 112–117, 136–138, Gln157, Tyr171, and Gln181 contribute to the dCTP site; these read KSTYAR and TLE. Glu138 acts as the Proton donor/acceptor in catalysis.

It belongs to the dCTP deaminase family. In terms of assembly, homotrimer.

The catalysed reaction is dCTP + H2O + H(+) = dUTP + NH4(+). The protein operates within pyrimidine metabolism; dUMP biosynthesis; dUMP from dCTP (dUTP route): step 1/2. In terms of biological role, catalyzes the deamination of dCTP to dUTP. The sequence is that of dCTP deaminase from Acinetobacter baumannii (strain SDF).